The sequence spans 642 residues: Voltage-gated potassium channel KCNC2 (642 aa).

The Cytoplasmic segment spans residues 1-233 (MGKIESNERV…EDPYSSRAAR (233 aa)). The interval 45 to 98 (DCLTAAGDKLQPLPPPLSPPPRPPPLSPVPSGCFEGGAGNCSSHGGNGGNGGSD) is disordered. Positions 56–72 (PLPPPLSPPPRPPPLSP) are enriched in pro residues. A compositionally biased stretch (gly residues) spans 78–98 (FEGGAGNCSSHGGNGGNGGSD). Residues His-128, Cys-134, Cys-155, and Cys-156 each coordinate Zn(2+). A helical transmembrane segment spans residues 234–254 (FIAFASLFFILVSITTFCLET). 2 N-linked (GlcNAc...) asparagine glycosylation sites follow: Asn-263 and Asn-270. Residues 287 to 307 (TYVEGVCVVWFTFEFLVRIVF) form a helical membrane-spanning segment. The Cytoplasmic segment spans residues 308–317 (SPNKLEFIKN). A helical membrane pass occupies residues 318 to 338 (LLNIIDFVAILPFYLEVGLSG). Residues 350-372 (FLRVVRFVRILRIFKLTRHFVGL) traverse the membrane as a helical; Voltage-sensor segment. The Cytoplasmic portion of the chain corresponds to 373–385 (RVLGHTLRASTNE). Residues 386 to 406 (FLLLIIFLALGVLIFATMIYY) form a helical membrane-spanning segment. Residues Thr-441, Leu-442, Gly-443, and Tyr-444 each coordinate K(+). Positions 441 to 446 (TLGYGD) match the Selectivity filter motif. Residues 457–477 (VGALCALAGVLTIAMPVPVIV) traverse the membrane as a helical segment. Residues 478–642 (NNFGMYYSLA…RSRSPIPSIL (165 aa)) are Cytoplasmic-facing. Residues 542 to 576 (SVLSGDDSTGSEPPLSPPERLPIRRSSTRDKNRRG) are disordered. The residue at position 604 (Ser-604) is a Phosphoserine.

This sequence belongs to the potassium channel family. C (Shaw) (TC 1.A.1.2) subfamily. Kv3.2/KCNC2 sub-subfamily. In terms of assembly, homotetramer and heterotetramer with other channel-forming alpha subunits, such as KCNC1. Interacts with KCNC1. Homotetramer or heterotetramer channel activity is regulated by association with modulating ancillary subunits such as KCNE1, KCNE2 and KCNE3, creating a functionally diverse range of channel complexes. Interacts with KCNE1, KCNE2 and KCNE3. Post-translationally, phosphorylated by PKA in cortical synaptosomes. cAMP-dependent phosphorylation inhibits channel activity. Histamine H2 receptor- and PKA-induced phosphorylation extends action potential spike duration, reduces action potential spike amplitude, sustains maximum firing frequency in hippocampal interneurons; also reduces the incidence of high-frequency oscillations in hippocampal CA3 pyramidal cell layers. Weakly expressed in the brain at postnatal age day 7 (P7) and increased at P60. Not detectable in newborn hippocampus. Expressed weakly at P7 in the early developing hippocampus, increasing progressively and reaching a plateau of expression at P14 that is maintained throughout P51. Expressed in paravalbumin- and somatostain-containing inhibitory interneurons of the hippocampus; in the CA1/CA3 stratum oriens-alveus and stratum pyramidale and in cells within the hilus and subgranular layer of the dentate gyrus (DG). Strongly expressed in parvalbumin (PV)-containing fast-spiking GABAergic inhibitor interneurons in deep cortical layers V and VI. Also expressed in non-fast-spiking calbindin (CB)- and/or somatostatin (SOM)-containing interneurons in deep cortical layers V and VI. Expressed in starburst amacrine cells of the retina in the inner nuclear layer (INL) and ganglion cell layer (GCL). Expressed in the suprachiasmatic nucleus (SCN) (at protein level). Expressed in the early developing brain, increasing progressively until P14.

It is found in the cell membrane. The protein localises to the membrane. Its subcellular location is the perikaryon. It localises to the cell projection. The protein resides in the axon. It is found in the dendrite. The protein localises to the postsynaptic cell membrane. Its subcellular location is the presynaptic cell membrane. It localises to the synapse. The protein resides in the synaptosome. It is found in the apical cell membrane. The protein localises to the basolateral cell membrane. It catalyses the reaction K(+)(in) = K(+)(out). Inhibited by millimolar levels of tetraethylammonium (TEA). Contrary to other channels, inhibited only by millimolar levels of 4-aminopyridine (4-AP). Inhibited by Stichodactyla helianthus peptide ShK. Its function is as follows. Voltage-gated potassium channel that mediates transmembrane potassium transport in excitable membranes, primarily in the brain. Contributes to the regulation of the fast action potential repolarization and in sustained high-frequency firing in neurons of the central nervous system. Homotetramer channels mediate delayed-rectifier voltage-dependent potassium currents that activate rapidly at high-threshold voltages and inactivate slowly. Forms tetrameric channels through which potassium ions pass in accordance with their electrochemical gradient. The channel alternates between opened and closed conformations in response to the voltage difference across the membrane. Can form functional homotetrameric and heterotetrameric channels that contain variable proportions of KCNC1, and possibly other family members as well; channel properties depend on the type of alpha subunits that are part of the channel. Channel properties may be modulated by either the association with ancillary subunits, such as KCNE1, KCNE2 and KCNE3 or indirectly by nitric oxide (NO) through a cGMP- and PKG-mediated signaling cascade, slowing channel activation and deactivation of delayed rectifier potassium channels. Contributes to fire sustained trains of very brief action potentials at high frequency in thalamocortical and suprachiasmatic nucleus (SCN) neurons, in hippocampal and neocortical interneurons and in retinal ganglion cells. Sustained maximal action potential firing frequency in inhibitory hippocampal interneurons is negatively modulated by histamine H2 receptor activation in a cAMP- and protein kinase (PKA) phosphorylation-dependent manner. Plays a role in maintaining the fidelity of synaptic transmission in neocortical GABAergic interneurons by generating action potential (AP) repolarization at nerve terminals, thus reducing spike-evoked calcium influx and GABA neurotransmitter release. Required for long-range synchronization of gamma oscillations over distance in the neocortex. Contributes to the modulation of the circadian rhythm of spontaneous action potential firing in suprachiasmatic nucleus (SCN) neurons in a light-dependent manner. The protein is Voltage-gated potassium channel KCNC2 of Mus musculus (Mouse).